Here is a 542-residue protein sequence, read N- to C-terminus: Monocarboxylate transporter 3 (542 aa).

Topologically, residues methionine 1–aspartate 19 are cytoplasmic. The helical transmembrane segment at glycine 20 to phenylalanine 40 threads the bilayer. Residues proline 41 to alanine 63 are Extracellular-facing. Residues tryptophan 64–valine 84 traverse the membrane as a helical segment. Over asparagine 85–methionine 93 the chain is Cytoplasmic. A helical membrane pass occupies residues leucine 94–isoleucine 114. Residues glutamate 115–threonine 119 are Extracellular-facing. Residues alanine 120–glycine 140 form a helical membrane-spanning segment. At threonine 141–glycine 152 the chain is on the cytoplasmic side. A helical transmembrane segment spans residues leucine 153–leucine 173. Topologically, residues glutamate 174–glycine 181 are extracellular. The chain crosses the membrane as a helical span at residues phenylalanine 182–leucine 202. Topologically, residues aspartate 203–glycine 265 are cytoplasmic. A disordered region spans residues glycine 226–lysine 247. Residues phenylalanine 266 to leucine 286 form a helical membrane-spanning segment. The Extracellular segment spans residues leucine 287–alanine 301. The chain crosses the membrane as a helical span at residues alanine 302–valine 322. At alanine 323–proline 330 the chain is on the cytoplasmic side. The chain crosses the membrane as a helical span at residues histidine 331–alanine 351. The Extracellular portion of the chain corresponds to arginine 352 to threonine 357. The chain crosses the membrane as a helical span at residues glycine 358–phenylalanine 378. The Cytoplasmic segment spans residues glutamate 379–serine 392. A helical membrane pass occupies residues alanine 393–glycine 413. Topologically, residues arginine 414–glutamate 423 are extracellular. A helical membrane pass occupies residues valine 424–threonine 444. Topologically, residues tyrosine 445–phenylalanine 542 are cytoplasmic. A disordered region spans residues lysine 453–phenylalanine 542. 2 basolateral sorting signal regions span residues glycine 465–glutamate 510 and glutamine 511–asparagine 532. The segment covering aspartate 468–glutamate 478 has biased composition (acidic residues).

It belongs to the major facilitator superfamily. Monocarboxylate porter (TC 2.A.1.13) family. As to expression, retinal pigment epithelium.

The protein localises to the basolateral cell membrane. The enzyme catalyses (S)-lactate(in) + H(+)(in) = (S)-lactate(out) + H(+)(out). Functionally, probable retinal pigment epithelium (RPE)-specific proton-coupled L-lactate transporter. May facilitate transport of lactate and H(+) out of the retina and could therefore play a role in pH and ion homeostasis of the outer retina. In Gallus gallus (Chicken), this protein is Monocarboxylate transporter 3 (SLC16A8).